We begin with the raw amino-acid sequence, 745 residues long: 5-methyltetrahydropteroyltriglutamate--homocysteine methyltransferase (745 aa).

Residues 19-22 and lysine 119 each bind 5-methyltetrahydropteroyltri-L-glutamate; that span reads RELK. L-homocysteine is bound by residues 418–420 and glutamate 471; that span reads IGS. Residues 418-420 and glutamate 471 each bind L-methionine; that span reads IGS. 5-methyltetrahydropteroyltri-L-glutamate is bound by residues 502–503 and tryptophan 548; that span reads RC. Aspartate 586 contacts L-homocysteine. Aspartate 586 provides a ligand contact to L-methionine. Glutamate 592 contacts 5-methyltetrahydropteroyltri-L-glutamate. 3 residues coordinate Zn(2+): histidine 628, cysteine 630, and glutamate 652. Catalysis depends on histidine 681, which acts as the Proton donor. Cysteine 713 contacts Zn(2+).

It belongs to the vitamin-B12 independent methionine synthase family. The cofactor is Zn(2+).

It carries out the reaction 5-methyltetrahydropteroyltri-L-glutamate + L-homocysteine = tetrahydropteroyltri-L-glutamate + L-methionine. It functions in the pathway amino-acid biosynthesis; L-methionine biosynthesis via de novo pathway; L-methionine from L-homocysteine (MetE route): step 1/1. In terms of biological role, catalyzes the transfer of a methyl group from 5-methyltetrahydrofolate to homocysteine resulting in methionine formation. The chain is 5-methyltetrahydropteroyltriglutamate--homocysteine methyltransferase from Corynebacterium glutamicum (strain ATCC 13032 / DSM 20300 / JCM 1318 / BCRC 11384 / CCUG 27702 / LMG 3730 / NBRC 12168 / NCIMB 10025 / NRRL B-2784 / 534).